The following is a 112-amino-acid chain: Putative pterin-4-alpha-carbinolamine dehydratase (112 aa).

The protein belongs to the pterin-4-alpha-carbinolamine dehydratase family.

It catalyses the reaction (4aS,6R)-4a-hydroxy-L-erythro-5,6,7,8-tetrahydrobiopterin = (6R)-L-erythro-6,7-dihydrobiopterin + H2O. This chain is Putative pterin-4-alpha-carbinolamine dehydratase, found in Shewanella sp. (strain MR-4).